Reading from the N-terminus, the 85-residue chain is Antibacterial factor-related peptide 2 (85 aa).

Positions 1 to 17 are cleaved as a signal peptide; it reads MFVRSLFLALLLATIVA. The propeptide occupies 82-85; it reads IKRG.

As to expression, expressed in the pharynx (at protein level). Detected in pharyngeal neurons and secretory cells.

It localises to the secreted. Exhibits antimicrobial activity against the Gram-positive bacteria B.subtilis IFO 3134, K.varians MAFF 118076 and S.aureus ATCC 6538P, the Gram-negative bacteria A.tumefaciens MAFF 1001, B.bacteriovorus MAFF 106101 and K.pneumoniae MAFF 519002, and the yeasts C.krusei MAFF 114085, K.thermotolerans MAFF 113848 and T.delbrueckii MAFF 113811. This Caenorhabditis elegans protein is Antibacterial factor-related peptide 2.